A 216-amino-acid chain; its full sequence is GTP cyclohydrolase-2 (216 aa).

Arg-51–Glu-55 is a GTP binding site. Residues Cys-56, Cys-67, and Cys-69 each contribute to the Zn(2+) site. GTP is bound by residues Gln-72, Glu-94–Arg-96, and Thr-116. The active-site Proton acceptor is Asp-128. The Nucleophile role is filled by Arg-130. 2 residues coordinate GTP: Thr-151 and Lys-156.

The protein belongs to the GTP cyclohydrolase II family. The cofactor is Zn(2+).

It carries out the reaction GTP + 4 H2O = 2,5-diamino-6-hydroxy-4-(5-phosphoribosylamino)-pyrimidine + formate + 2 phosphate + 3 H(+). Its pathway is cofactor biosynthesis; riboflavin biosynthesis; 5-amino-6-(D-ribitylamino)uracil from GTP: step 1/4. Functionally, catalyzes the conversion of GTP to 2,5-diamino-6-ribosylamino-4(3H)-pyrimidinone 5'-phosphate (DARP), formate and pyrophosphate. This chain is GTP cyclohydrolase-2, found in Haemophilus influenzae (strain 86-028NP).